The sequence spans 308 residues: Oxygen-dependent coproporphyrinogen-III oxidase (308 aa).

Ser100 provides a ligand contact to substrate. Residues His104 and His114 each contribute to the a divalent metal cation site. Residue His114 is the Proton donor of the active site. 116–118 (NFR) provides a ligand contact to substrate. 2 residues coordinate a divalent metal cation: His153 and His183. The tract at residues 248–283 (YVEFNLVFDRGTIFGLQSGGRTESILSSMPPMATWK) is important for dimerization. 266–268 (GGR) is a substrate binding site.

Belongs to the aerobic coproporphyrinogen-III oxidase family. As to quaternary structure, homodimer. Requires a divalent metal cation as cofactor.

The protein resides in the cytoplasm. It catalyses the reaction coproporphyrinogen III + O2 + 2 H(+) = protoporphyrinogen IX + 2 CO2 + 2 H2O. It functions in the pathway porphyrin-containing compound metabolism; protoporphyrin-IX biosynthesis; protoporphyrinogen-IX from coproporphyrinogen-III (O2 route): step 1/1. Its function is as follows. Involved in the heme biosynthesis. Catalyzes the aerobic oxidative decarboxylation of propionate groups of rings A and B of coproporphyrinogen-III to yield the vinyl groups in protoporphyrinogen-IX. The chain is Oxygen-dependent coproporphyrinogen-III oxidase from Francisella tularensis subsp. holarctica (strain LVS).